The sequence spans 596 residues: Elongation factor 4 (596 aa).

The region spanning 2–183 (KNIRNFSIIA…EIIRRIPAPN (182 aa)) is the tr-type G domain. Residues 14 to 19 (DHGKST) and 130 to 133 (NKID) contribute to the GTP site.

The protein belongs to the TRAFAC class translation factor GTPase superfamily. Classic translation factor GTPase family. LepA subfamily.

It localises to the cell inner membrane. The catalysed reaction is GTP + H2O = GDP + phosphate + H(+). In terms of biological role, required for accurate and efficient protein synthesis under certain stress conditions. May act as a fidelity factor of the translation reaction, by catalyzing a one-codon backward translocation of tRNAs on improperly translocated ribosomes. Back-translocation proceeds from a post-translocation (POST) complex to a pre-translocation (PRE) complex, thus giving elongation factor G a second chance to translocate the tRNAs correctly. Binds to ribosomes in a GTP-dependent manner. This Wolinella succinogenes (strain ATCC 29543 / DSM 1740 / CCUG 13145 / JCM 31913 / LMG 7466 / NCTC 11488 / FDC 602W) (Vibrio succinogenes) protein is Elongation factor 4.